Here is a 475-residue protein sequence, read N- to C-terminus: MSPQTETKTSVGFKAGVRDYRLTYYTPNYKTKDTDILAAFRMTPQPGVPPEEAGAAVAAESSTGTWTTVWTDGLTSLDRYKGRCYEIEAVTGEKNQFIAYVAYPLDLFEEGSVTNLFTSIVGNVFGFKALRALRLEDLRIPPAYSKTFIGPPHGIQVERDKSNKYGRPLLGCTIKPKLGLSAKNYGRAVYECLRGGLDFTKDDENVNSQPFMRWRDRFLFVAEALFKAQAETGEIKGHYLNVTAGTYEELLKRAHCARELGVPIVMHDYLTGGFTANTSLAHYCRDNGLLLHIHRAMHAVIDRQKNHGIHFRVLAKALRMSGGDHIHAGTVVGKLEGERDVTLGFVDLLRDDYIEKDRSRGIYFTQDWVSMPGVLPVASGGIHVWHMPALTEIFGDDSVLQFGGGTLGHPWGNAPGAVANRVALEACVKARNEGRDLAREGNEIIREASQWSPESAAACEVWKEIKFEFEAMDTL.

Residues 1–2 (MS) constitute a propeptide that is removed on maturation. Pro3 is subject to N-acetylproline. Position 14 is an N6,N6,N6-trimethyllysine (Lys14). Residues Asn123 and Thr173 each coordinate substrate. Residue Lys175 is the Proton acceptor of the active site. Residue Lys177 participates in substrate binding. Mg(2+) contacts are provided by Lys201, Asp203, and Glu204. The residue at position 201 (Lys201) is an N6-carboxylysine. Catalysis depends on His294, which acts as the Proton acceptor. 3 residues coordinate substrate: Arg295, His327, and Ser379.

This sequence belongs to the RuBisCO large chain family. Type I subfamily. In terms of assembly, heterohexadecamer of 8 large chains and 8 small chains. Requires Mg(2+) as cofactor.

Its subcellular location is the plastid. The protein resides in the chloroplast. The catalysed reaction is 2 (2R)-3-phosphoglycerate + 2 H(+) = D-ribulose 1,5-bisphosphate + CO2 + H2O. It carries out the reaction D-ribulose 1,5-bisphosphate + O2 = 2-phosphoglycolate + (2R)-3-phosphoglycerate + 2 H(+). In terms of biological role, ruBisCO catalyzes two reactions: the carboxylation of D-ribulose 1,5-bisphosphate, the primary event in carbon dioxide fixation, as well as the oxidative fragmentation of the pentose substrate in the photorespiration process. Both reactions occur simultaneously and in competition at the same active site. This chain is Ribulose bisphosphate carboxylase large chain, found in Huperzia lucidula (Shining clubmoss).